The sequence spans 1706 residues: Cadherin-99C (1706 aa).

Positions 1–28 (MAARNSLTPQQGLGFFGLLILLCSAVLG) are cleaved as a signal peptide. Residues 29 to 1395 (KSQMCEVETG…AIDNEVFPFT (1367 aa)) lie on the Extracellular side of the membrane. Cadherin domains follow at residues 68–142 (DPDT…APRF), 143–264 (MNTP…DPSF), 277–387 (INPE…PPVI), 388–500 (SSSQ…APKL), 519–604 (VTQV…PPRF), 605–704 (QKPI…NPEF), 707–807 (STLP…VPKF), 808–908 (SDAR…PPRF), 909–1005 (ITVP…RVDV), 1038–1148 (SDDS…APEF), and 1156–1270 (QQDT…ALSF). N-linked (GlcNAc...) asparagine glycans are attached at residues N105 and N188. N442, N553, N620, and N753 each carry an N-linked (GlcNAc...) asparagine glycan. N-linked (GlcNAc...) asparagine glycosylation is found at N1053, N1088, and N1108. N1311 and N1367 each carry an N-linked (GlcNAc...) asparagine glycan. The chain crosses the membrane as a helical span at residues 1396–1416 (LIAISLVILILGTIGIIYICI). The Cytoplasmic portion of the chain corresponds to 1417–1706 (SWSKYKNFKQ…RSEVETTTEL (290 aa)).

As to quaternary structure, interacts (via the cytoplasmic domain) with ck. Interacts (via the cytoplasmic domain) with Cul1 and Ubr3.

It is found in the apical cell membrane. It localises to the endosome membrane. The protein localises to the cell projection. The protein resides in the microvillus membrane. In terms of biological role, cadherin that functions in epithelial morphogenesis and the intestine epithelial immune response. Essential for female fertility. Regulates the length and organization of apical microvilli in developing follicle cells and salivary glands. Function in the follicle cell is essential for egg development as the microvilli secrete eggshell material such as the vitelline membrane. Acts at least in part by regulating the recruitment of the myosin ck to the follicle cell microvilli. Also required to regulate cell rearrangements during salivary tube elongation, possibly by modulating cellular adhesion between the apical surface and apical extracellular matrix during epithelial tube elongation. May also function in cellular adhesion during the development of other tubular epithelia such as the trachea. Possibly functions as an apical membrane determinant which acts in apical membrane expansion during salivary and tracheal epithelial tube elongation. In salivary gland development, this function is independent of the other apical membrane determinants crb and sas. Essential downstream component of a hh-signaling pathway which regulates the Duox-dependent gut epithelial immune response to bacterial uracil; required for endosome formation in the enterocyte and activating norpA-dependent Ca2+ mobilization, which are essential steps in the Duox-dependent production of reactive oxygen species (ROS) in response to intestinal bacterial infection. The polypeptide is Cadherin-99C (Drosophila melanogaster (Fruit fly)).